We begin with the raw amino-acid sequence, 130 residues long: MAMKIRLARGGSKKRPFYRIVAADSRMPRDGRFIEKLGTYNPLLPKDSEDRVKMDLERVQYWLGEGAKPTDRVARMLEAAEVLPKTERNNPKKAVPGKKAQDRAEEKAAKAAEASEAPADEAPAEEAAAE.

Positions 82–130 (VLPKTERNNPKKAVPGKKAQDRAEEKAAKAAEASEAPADEAPAEEAAAE) are disordered. The segment covering 99–110 (KAQDRAEEKAAK) has biased composition (basic and acidic residues). Positions 118–130 (PADEAPAEEAAAE) are enriched in acidic residues.

Belongs to the bacterial ribosomal protein bS16 family.

The chain is Small ribosomal subunit protein bS16 from Dinoroseobacter shibae (strain DSM 16493 / NCIMB 14021 / DFL 12).